A 471-amino-acid chain; its full sequence is Putative multidrug resistance protein MdtD (471 aa).

Residues 1–11 (MTDLPDSTRWQ) are Periplasmic-facing. Residues 12-32 (LWIVAFGFFMQSLDTTIVNTA) traverse the membrane as a helical segment. Residues 33-48 (LPSMAQSLGESPLHMH) are Cytoplasmic-facing. The chain crosses the membrane as a helical span at residues 49–69 (MVIVSYVLTVAVMLPASGWLA). Residues 70–76 (DKVGVRN) lie on the Periplasmic side of the membrane. The chain crosses the membrane as a helical span at residues 77 to 97 (IFFTAIVLFTLGSLFCALSGT). Residues 98 to 101 (LNEL) are Cytoplasmic-facing. A helical membrane pass occupies residues 102–124 (LLARALQGVGGAMMVPVGRLTVM). Residues 125 to 137 (KIVPREQYMAAMT) are Periplasmic-facing. Residues 138–158 (FVTLPGQVGPLLGPALGGLLV) traverse the membrane as a helical segment. Residues 159–164 (EYASWH) are Cytoplasmic-facing. A helical transmembrane segment spans residues 165 to 185 (WIFLINIPVGIIGAIATLMLM). Residues 186–196 (PNYTMQTRRFD) lie on the Periplasmic side of the membrane. Residues 197-217 (LSGFLLLAVGMAVLTLALDGS) traverse the membrane as a helical segment. The Cytoplasmic portion of the chain corresponds to 218–224 (KGTGLSP). The helical transmembrane segment at 225–245 (LAITGLVAVGVVALVLYLLHA) threads the bilayer. Residues 246-262 (RNNNRALFSLKLFRTRT) are Periplasmic-facing. Residues 263 to 283 (FSLGLAGSFAGRIGSGMLPFM) form a helical membrane-spanning segment. Residues 284 to 285 (TP) are Cytoplasmic-facing. A helical transmembrane segment spans residues 286–306 (VFLQIGLGFSPFHAGLMMIPM). The Periplasmic portion of the chain corresponds to 307–341 (VLGSMGMKRIVVQVVNRFGYRRVLVATTLGLSLVT). The helical transmembrane segment at 342–362 (LLFMTTALLGWYYVLPFVLFL) threads the bilayer. The Cytoplasmic portion of the chain corresponds to 363-395 (QGMVNSTRFSSMNTLTLKDLPDNLASSGNSLLS). The chain crosses the membrane as a helical span at residues 396–416 (MIMQLSMSIGVTIAGLLLGLF). Residues 417–430 (GSQHVSVDSSTTQT) are Periplasmic-facing. A helical transmembrane segment spans residues 431–451 (VFMYTWLSMAFIIALPAFIFA). Residues 452–471 (RVPNDTHQNVAISRRKRSAQ) are Cytoplasmic-facing.

It belongs to the major facilitator superfamily. TCR/Tet family.

It localises to the cell inner membrane. The sequence is that of Putative multidrug resistance protein MdtD from Escherichia coli O157:H7.